Reading from the N-terminus, the 83-residue chain is Apolipoprotein C-I (83 aa).

A signal peptide spans 1–26; the sequence is MRLFLSLPVLVVVLSIVLEGPAPAQG.

This sequence belongs to the apolipoprotein C1 family. As to expression, synthesized mainly in liver and to a minor degree in intestine. Also found in the lung and spleen.

It localises to the secreted. Functionally, inhibitor of lipoprotein binding to the low density lipoprotein (LDL) receptor, LDL receptor-related protein, and very low density lipoprotein (VLDL) receptor. Associates with high density lipoproteins (HDL) and the triacylglycerol-rich lipoproteins in the plasma and makes up about 10% of the protein of the VLDL and 2% of that of HDL. Appears to interfere directly with fatty acid uptake and is also the major plasma inhibitor of cholesteryl ester transfer protein (CETP). Binds free fatty acids and reduces their intracellular esterification. Modulates the interaction of APOE with beta-migrating VLDL and inhibits binding of beta-VLDL to the LDL receptor-related protein. This is Apolipoprotein C-I (APOC1) from Homo sapiens (Human).